We begin with the raw amino-acid sequence, 535 residues long: MSKLDLTKYGILNATEIIHNPSYEFLFEEETKAGLEGFEKGQLTELGAVNVMTGVYTGRSPKDKFFVMDDTTKNTIWWTSDEYKNDNKPVTPEAWKSIKKLAVEQLSGKRLFVVDTFCGANESSRLKIRFIMEVAWQAHFVKNMFIRPTEEELANYGEPDFVVMTASKAKVENYKELGLNSETAVVFNLTEKVQVILNTWYGGEMKKGMFSYMNYLLPLRGMASMHCSANTSMDEKETAIFFGLSGTGKTTLSTDPKRKLIGDDEHGWDKDGIFNFEGGCYAKVINLSRENEPDIYNAIRRNALLENVTVDAAGKIDFGDKSVTENTRVSYPIYHIENIVKPVSKAGHAKKVIFLSADAFGVLPPVSILTPEQTKYYFLSGFTAKLAGTERGITEPTPTFSACFGAAFLSLHPTKYAEELVKKMEMVGATAYLVNTGWNGTGKRISIKDTRGIIDAILDGSIDKAPTKAIPFFDFKVPTALPGVDPNILDPRDTYADAAEWTKKAKDLAERFIKNFVKFTGNDAGKALVAAGPKL.

Residues Arg59, Tyr201, and Lys207 each coordinate substrate. Residues Lys207, His226, and 243–251 (GLSGTGKTT) each bind ATP. Residues Lys207 and His226 each coordinate Mn(2+). Position 264 (Asp264) interacts with Mn(2+). ATP is bound by residues Glu292, Arg328, 444–445 (RI), and Thr450. Position 328 (Arg328) interacts with substrate.

This sequence belongs to the phosphoenolpyruvate carboxykinase (ATP) family. Requires Mn(2+) as cofactor.

It is found in the cytoplasm. It catalyses the reaction oxaloacetate + ATP = phosphoenolpyruvate + ADP + CO2. Its pathway is carbohydrate biosynthesis; gluconeogenesis. Functionally, involved in the gluconeogenesis. Catalyzes the conversion of oxaloacetate (OAA) to phosphoenolpyruvate (PEP) through direct phosphoryl transfer between the nucleoside triphosphate and OAA. The chain is Phosphoenolpyruvate carboxykinase (ATP) from Porphyromonas gingivalis (strain ATCC 33277 / DSM 20709 / CIP 103683 / JCM 12257 / NCTC 11834 / 2561).